The sequence spans 1004 residues: Bifunctional glutamine synthetase adenylyltransferase/adenylyl-removing enzyme (1004 aa).

The tract at residues 1–497 is adenylyl removase; the sequence is MCCTTVVVVR…LHAKLFYQPL (497 aa). The segment at 502 to 1004 is adenylyl transferase; the sequence is GPASLEIRHG…KTFVRKVFGS (503 aa).

Belongs to the GlnE family. It depends on Mg(2+) as a cofactor.

The enzyme catalyses [glutamine synthetase]-O(4)-(5'-adenylyl)-L-tyrosine + phosphate = [glutamine synthetase]-L-tyrosine + ADP. It carries out the reaction [glutamine synthetase]-L-tyrosine + ATP = [glutamine synthetase]-O(4)-(5'-adenylyl)-L-tyrosine + diphosphate. Its function is as follows. Involved in the regulation of glutamine synthetase GlnA, a key enzyme in the process to assimilate ammonia. When cellular nitrogen levels are high, the C-terminal adenylyl transferase (AT) inactivates GlnA by covalent transfer of an adenylyl group from ATP to specific tyrosine residue of GlnA, thus reducing its activity. Conversely, when nitrogen levels are low, the N-terminal adenylyl removase (AR) activates GlnA by removing the adenylyl group by phosphorolysis, increasing its activity. The regulatory region of GlnE binds the signal transduction protein PII (GlnB) which indicates the nitrogen status of the cell. The protein is Bifunctional glutamine synthetase adenylyltransferase/adenylyl-removing enzyme of Mycobacterium leprae (strain TN).